A 452-amino-acid polypeptide reads, in one-letter code: Glycoprotein endo-alpha-1,2-mannosidase-like protein (452 aa).

Residues M1–A8 lie on the Cytoplasmic side of the membrane. Residues C9–L29 form a helical; Signal-anchor for type II membrane protein membrane-spanning segment. At K30–M452 the chain is on the lumenal side. Residues P40–P90 are disordered. A compositionally biased stretch (pro residues) spans P64–T74.

Belongs to the glycosyl hydrolase 99 family.

It is found in the golgi apparatus membrane. In Mus musculus (Mouse), this protein is Glycoprotein endo-alpha-1,2-mannosidase-like protein (Maneal).